We begin with the raw amino-acid sequence, 486 residues long: Malonate-semialdehyde dehydrogenase (486 aa).

The NAD(+) site is built by phenylalanine 154, lysine 178, glutamate 181, arginine 182, and serine 231. Catalysis depends on cysteine 286, which acts as the Nucleophile. Glutamate 386 is a binding site for NAD(+).

The protein belongs to the aldehyde dehydrogenase family. IolA subfamily. Homotetramer.

It catalyses the reaction 3-oxopropanoate + NAD(+) + CoA + H2O = hydrogencarbonate + acetyl-CoA + NADH + H(+). The enzyme catalyses 2-methyl-3-oxopropanoate + NAD(+) + CoA + H2O = propanoyl-CoA + hydrogencarbonate + NADH + H(+). Its pathway is polyol metabolism; myo-inositol degradation into acetyl-CoA; acetyl-CoA from myo-inositol: step 7/7. Its function is as follows. Catalyzes the oxidation of malonate semialdehyde (MSA) and methylmalonate semialdehyde (MMSA) into acetyl-CoA and propanoyl-CoA, respectively. Is involved in a myo-inositol catabolic pathway. Bicarbonate, and not CO2, is the end-product of the enzymatic reaction. The sequence is that of Malonate-semialdehyde dehydrogenase from Bacillus cereus (strain ATCC 14579 / DSM 31 / CCUG 7414 / JCM 2152 / NBRC 15305 / NCIMB 9373 / NCTC 2599 / NRRL B-3711).